The primary structure comprises 198 residues: Na(+)-translocating NADH-quinone reductase subunit E (198 aa).

6 helical membrane-spanning segments follow: residues 11–31 (SVFI…FLAV), 35–55 (VSTA…SVPV), 77–97 (FLNF…LEMF), 110–130 (GIFL…SFMV), 140–160 (VVYG…LAGL), and 176–196 (LGIT…FSGI).

This sequence belongs to the NqrDE/RnfAE family. In terms of assembly, composed of six subunits; NqrA, NqrB, NqrC, NqrD, NqrE and NqrF.

It is found in the cell inner membrane. It carries out the reaction a ubiquinone + n Na(+)(in) + NADH + H(+) = a ubiquinol + n Na(+)(out) + NAD(+). Its function is as follows. NQR complex catalyzes the reduction of ubiquinone-1 to ubiquinol by two successive reactions, coupled with the transport of Na(+) ions from the cytoplasm to the periplasm. NqrA to NqrE are probably involved in the second step, the conversion of ubisemiquinone to ubiquinol. In Mannheimia succiniciproducens (strain KCTC 0769BP / MBEL55E), this protein is Na(+)-translocating NADH-quinone reductase subunit E.